We begin with the raw amino-acid sequence, 139 residues long: Histone H2B.11 (139 aa).

A compositionally biased stretch (basic and acidic residues) spans 1–39; the sequence is MAPKAEKKPAEKKPVEEKAEKKPKAEKRVPGAKEGGGEK. The interval 1 to 47 is disordered; the sequence is MAPKAEKKPAEKKPVEEKAEKKPKAEKRVPGAKEGGGEKKGKKKAKK. N6-acetyllysine is present on residues Lys7 and Lys27. Lys135 is covalently cross-linked (Glycyl lysine isopeptide (Lys-Gly) (interchain with G-Cter in ubiquitin)).

The protein belongs to the histone H2B family. The nucleosome is a histone octamer containing two molecules each of H2A, H2B, H3 and H4 assembled in one H3-H4 heterotetramer and two H2A-H2B heterodimers. The octamer wraps approximately 147 bp of DNA. In terms of processing, can be acetylated to form H2BK6ac and H2BK33ac. Post-translationally, monoubiquitinated by BRE1 to form H2BK143ub1 and deubiquitinated by UBP26. Required for heterochromatic histone H3 di- and trimethylation at H3K4me. May give a specific tag for epigenetic transcriptional activation.

It is found in the nucleus. It localises to the chromosome. Its function is as follows. Core component of nucleosome. Nucleosomes wrap and compact DNA into chromatin, limiting DNA accessibility to the cellular machineries which require DNA as a template. Histones thereby play a central role in transcription regulation, DNA repair, DNA replication and chromosomal stability. DNA accessibility is regulated via a complex set of post-translational modifications of histones, also called histone code, and nucleosome remodeling. The chain is Histone H2B.11 (H2B.11) from Oryza sativa subsp. indica (Rice).